A 162-amino-acid polypeptide reads, in one-letter code: Caveolin-2 (162 aa).

At 1–86 the chain is on the cytoplasmic side; that stretch reads MGLETEKADV…FEISKYVIYK (86 aa). Residue Tyr-19 is modified to Phosphotyrosine; by SRC. Residues Ser-20 and Ser-23 each carry the phosphoserine modification. Tyr-27 carries the phosphotyrosine; by SRC modification. Residue Ser-36 is modified to Phosphoserine. An intramembrane region (helical) is located at residues 87–107; it reads FLTLFLAIPLAFAAGILFATL. At 108 to 162 the chain is on the cytoplasmic side; sequence SCLHIWIIMPFVKTCLMVLPSVQTIWKSITDVVIAPLCTSVGRSFSSVSLQLSHD.

This sequence belongs to the caveolin family. In terms of assembly, monomer or homodimer. Interacts with CAV1; the interaction forms a stable heterooligomeric complex that is required for targeting to lipid rafts and for caveolae formation. Tyrosine phosphorylated forms do not form heterooligomers with the Tyr-19-phosphorylated form existing as a monomer or dimer, and the Tyr-27-form as a monomer only. Interacts (tyrosine phosphorylated form) with the SH2 domain-containing proteins, RASA1, NCK1 and SRC. Interacts (tyrosine phosphorylated form) with INSR, the interaction (Tyr-27-phosphorylated form) is increased on insulin stimulation. Interacts (Tyr-19 phosphorylated form) with MAPK1 (phosphorylated form); the interaction, promoted by insulin, leads to nuclear location and MAPK1 activation. Interacts with STAT3; the interaction is increased on insulin-induced tyrosine phosphorylation leading to STAT activation. Post-translationally, phosphorylated on serine and tyrosine residues. CAV1 promotes phosphorylation on Ser-23 which then targets the complex to the plasma membrane, lipid rafts and caveolae. Phosphorylation on Ser-36 appears to modulate mitosis in endothelial cells. Phosphorylation on both Tyr-19 and Tyr-27 is required for insulin-induced 'Ser-727' phosphorylation of STAT3 and its activation. Phosphorylation on Tyr-19 is required for insulin-induced phosphorylation of MAPK1 and DNA binding of STAT3. Tyrosine phosphorylation is induced by both EGF and insulin (By. similarity).

It localises to the nucleus. The protein resides in the cytoplasm. The protein localises to the golgi apparatus membrane. It is found in the cell membrane. Its subcellular location is the membrane. It localises to the caveola. In terms of biological role, may act as a scaffolding protein within caveolar membranes. Interacts directly with G-protein alpha subunits and can functionally regulate their activity. Acts as an accessory protein in conjunction with CAV1 in targeting to lipid rafts and driving caveolae formation. The Ser-36 phosphorylated form has a role in modulating mitosis in endothelial cells. Positive regulator of cellular mitogenesis of the MAPK signaling pathway. Required for the insulin-stimulated nuclear translocation and activation of MAPK1 and STAT3, and the subsequent regulation of cell cycle progression. In Neofelis nebulosa (Clouded leopard), this protein is Caveolin-2 (CAV2).